The chain runs to 431 residues: Enolase (431 aa).

Residue Gln-163 participates in (2R)-2-phosphoglycerate binding. The Proton donor role is filled by Glu-205. Residues Asp-242, Glu-288, and Asp-315 each coordinate Mg(2+). (2R)-2-phosphoglycerate contacts are provided by Lys-340, Arg-369, Ser-370, and Lys-391. Lys-340 serves as the catalytic Proton acceptor.

Belongs to the enolase family. The cofactor is Mg(2+).

The protein localises to the cytoplasm. It is found in the secreted. The protein resides in the cell surface. The enzyme catalyses (2R)-2-phosphoglycerate = phosphoenolpyruvate + H2O. It functions in the pathway carbohydrate degradation; glycolysis; pyruvate from D-glyceraldehyde 3-phosphate: step 4/5. Its function is as follows. Catalyzes the reversible conversion of 2-phosphoglycerate (2-PG) into phosphoenolpyruvate (PEP). It is essential for the degradation of carbohydrates via glycolysis. The chain is Enolase from Bacillus cereus (strain ZK / E33L).